Reading from the N-terminus, the 501-residue chain is Probable pectate lyase 13 (501 aa).

Residues 1-22 (MLLQNFSNTIFLLCLFFTLLSA) form the signal peptide. N-linked (GlcNAc...) asparagine glycosylation is found at Asn-27 and Asn-49. The disordered stretch occupies residues 55-78 (RQLSSPSSSSSSSSSSSSSSCRTG). Positions 58–74 (SSPSSSSSSSSSSSSSS) are enriched in low complexity. The Ca(2+) site is built by Asp-217, Asp-241, and Asp-245. Arg-297 is a catalytic residue. Disordered regions lie at residues 329–359 (INSQ…DGEW) and 408–463 (NAGV…SSGD). Residues 343-357 (SAKEVTKRVDSKDDG) show a composition bias toward basic and acidic residues. The span at 430 to 449 (GGDGGGGGSSGGSSGGGMDV) shows a compositional bias: gly residues. Positions 450-463 (MGGTTRGSSSSSGD) are enriched in low complexity. A lipid anchor (GPI-anchor amidated serine) is attached at Ser-474. Positions 475–501 (DAPSRPRLTLLFSLLMISVLSLSTLLL) are cleaved as a propeptide — removed in mature form.

It belongs to the polysaccharide lyase 1 family. Ca(2+) serves as cofactor. Expressed equally in mature leaves, buds, flowers, rosettes and roots.

Its subcellular location is the cell membrane. The enzyme catalyses Eliminative cleavage of (1-&gt;4)-alpha-D-galacturonan to give oligosaccharides with 4-deoxy-alpha-D-galact-4-enuronosyl groups at their non-reducing ends.. It participates in glycan metabolism; pectin degradation; 2-dehydro-3-deoxy-D-gluconate from pectin: step 2/5. Its function is as follows. Susceptibility factor required for infection by most powdery mildews, but not by unrelated pathogens. Exact function not known, but clearly affects cell wall composition. This chain is Probable pectate lyase 13 (PMR6), found in Arabidopsis thaliana (Mouse-ear cress).